The primary structure comprises 223 residues: Cytidylate kinase (223 aa).

17–25 (GPTASGKGT) serves as a coordination point for ATP.

Belongs to the cytidylate kinase family. Type 1 subfamily.

The protein localises to the cytoplasm. The enzyme catalyses CMP + ATP = CDP + ADP. The catalysed reaction is dCMP + ATP = dCDP + ADP. This chain is Cytidylate kinase, found in Bordetella bronchiseptica (strain ATCC BAA-588 / NCTC 13252 / RB50) (Alcaligenes bronchisepticus).